Consider the following 199-residue polypeptide: Lysine exporter LysE (199 aa).

5 helical membrane-spanning segments follow: residues 6-26 (VVGF…NAFV), 42-62 (LCTV…GALI), 68-88 (ALNV…LLAA), 144-164 (WLFG…LGFG), and 178-198 (WRIL…SLTV).

The protein belongs to the LysE/ArgO transporter (TC 2.A.75) family.

Its subcellular location is the cell inner membrane. Its function is as follows. Catalyzes the efflux of L-lysine. This chain is Lysine exporter LysE, found in Mycobacterium bovis (strain ATCC BAA-935 / AF2122/97).